The following is a 577-amino-acid chain: Zinc finger protein 384 (577 aa).

Residues Thr171–Gly225 are disordered. The segment covering Glu175 to Ser185 has biased composition (gly residues). At Ser214 the chain carries Phosphoserine. 8 consecutive C2H2-type zinc fingers follow at residues Tyr228–His250, His256–His278, Tyr284–His306, His317–His339, Tyr345–His367, Tyr373–His397, Phe403–His425, and Tyr433–His455. The span at Gln501–Gln515 shows a compositional bias: low complexity. Residues Gln501–Pro550 form a disordered region.

It belongs to the krueppel C2H2-type zinc-finger protein family. Interacts with BCAR1.

Its subcellular location is the nucleus. Functionally, transcription factor that binds the consensus DNA sequence [GC]AAAAA. Seems to bind and regulate the promoters of MMP1, MMP3, MMP7 and COL1A1. The polypeptide is Zinc finger protein 384 (ZNF384) (Homo sapiens (Human)).